We begin with the raw amino-acid sequence, 144 residues long: Protein WAP-3 (144 aa).

Positions 1–21 are cleaved as a signal peptide; the sequence is MRSRSFLVLVAVFLICETLVA. The interval 28 to 49 is disordered; the sequence is RGPKGQGQDPVEGQDQDEGQGP. Position 34 (glycine 34) is a region of interest, 8 X 6 AA approximate tandem repeats. A run of 8 repeats spans residues 34 to 39, 40 to 45, 46 to 51, 58 to 63, 64 to 69, 70 to 75, 76 to 81, and 82 to 87. The interval 64–85 is disordered; it reads GQDPVEGQDPVKAQLPDKVQDP. Residues 97 to 144 enclose the WAP domain; the sequence is LFPKPGVCPKIIFCPLVNPPIKCWRDSHCPGVKKCCPSLCGKGCVTPR. Disulfide bonds link cysteine 104-cysteine 132, cysteine 110-cysteine 136, cysteine 119-cysteine 131, and cysteine 125-cysteine 140.

As to expression, large intestine (relatively low levels).

The polypeptide is Protein WAP-3 (Sus scrofa (Pig)).